Reading from the N-terminus, the 433-residue chain is Pyrimidine-nucleoside phosphorylase (433 aa).

81-83 is a binding site for phosphate; it reads KHS. 2 residues coordinate K(+): Gly88 and Thr90. Phosphate is bound by residues Thr92, 108–110, and Thr120; that span reads KMS. Substrate-binding residues include Arg168 and Lys187. Residues Leu243, Ala246, and Glu255 each contribute to the K(+) site.

This sequence belongs to the thymidine/pyrimidine-nucleoside phosphorylase family. In terms of assembly, homodimer. K(+) serves as cofactor.

The enzyme catalyses uridine + phosphate = alpha-D-ribose 1-phosphate + uracil. It catalyses the reaction thymidine + phosphate = 2-deoxy-alpha-D-ribose 1-phosphate + thymine. It carries out the reaction 2'-deoxyuridine + phosphate = 2-deoxy-alpha-D-ribose 1-phosphate + uracil. Its function is as follows. Catalyzes phosphorolysis of the pyrimidine nucleosides uridine, thymidine and 2'-deoxyuridine with the formation of the corresponding pyrimidine base and ribose-1-phosphate. The protein is Pyrimidine-nucleoside phosphorylase (pdp) of Geobacillus stearothermophilus (Bacillus stearothermophilus).